The chain runs to 412 residues: 1-deoxy-D-xylulose 5-phosphate reductoisomerase (412 aa).

The NADPH site is built by Thr5, Gly6, Ser7, Ile8, Gly31, Asn33, and Asn125. Lys126 provides a ligand contact to 1-deoxy-D-xylulose 5-phosphate. NADPH is bound at residue Glu127. Asp151 contacts Mn(2+). Residues Ser152, Glu153, Ser189, and His212 each coordinate 1-deoxy-D-xylulose 5-phosphate. Position 153 (Glu153) interacts with Mn(2+). Gly218 is a binding site for NADPH. Ser225, Asn230, Lys231, and Glu234 together coordinate 1-deoxy-D-xylulose 5-phosphate. Glu234 contacts Mn(2+).

This sequence belongs to the DXR family. Requires Mg(2+) as cofactor. Mn(2+) serves as cofactor.

It carries out the reaction 2-C-methyl-D-erythritol 4-phosphate + NADP(+) = 1-deoxy-D-xylulose 5-phosphate + NADPH + H(+). It participates in isoprenoid biosynthesis; isopentenyl diphosphate biosynthesis via DXP pathway; isopentenyl diphosphate from 1-deoxy-D-xylulose 5-phosphate: step 1/6. Its function is as follows. Catalyzes the NADPH-dependent rearrangement and reduction of 1-deoxy-D-xylulose-5-phosphate (DXP) to 2-C-methyl-D-erythritol 4-phosphate (MEP). This is 1-deoxy-D-xylulose 5-phosphate reductoisomerase from Prochlorococcus marinus (strain MIT 9313).